The sequence spans 207 residues: Large ribosomal subunit protein uL4 (207 aa).

A disordered region spans residues 48–70; that stretch reads KAQKTRSEVSGGGAKPWRQKGTG.

It belongs to the universal ribosomal protein uL4 family. Part of the 50S ribosomal subunit.

In terms of biological role, one of the primary rRNA binding proteins, this protein initially binds near the 5'-end of the 23S rRNA. It is important during the early stages of 50S assembly. It makes multiple contacts with different domains of the 23S rRNA in the assembled 50S subunit and ribosome. Its function is as follows. Forms part of the polypeptide exit tunnel. The chain is Large ribosomal subunit protein uL4 from Francisella tularensis subsp. mediasiatica (strain FSC147).